The chain runs to 134 residues: Ribosome-binding factor A (134 aa).

Belongs to the RbfA family. In terms of assembly, monomer. Binds 30S ribosomal subunits, but not 50S ribosomal subunits or 70S ribosomes.

The protein resides in the cytoplasm. Its function is as follows. One of several proteins that assist in the late maturation steps of the functional core of the 30S ribosomal subunit. Associates with free 30S ribosomal subunits (but not with 30S subunits that are part of 70S ribosomes or polysomes). Required for efficient processing of 16S rRNA. May interact with the 5'-terminal helix region of 16S rRNA. In Rhizobium leguminosarum bv. trifolii (strain WSM2304), this protein is Ribosome-binding factor A.